The chain runs to 573 residues: Glutathione hydrolase 5 proenzyme (573 aa).

The Cytoplasmic segment spans residues 1-8; that stretch reads MAWGHRAT. The helical; Signal-anchor for type II membrane protein transmembrane segment at 9-29 threads the bilayer; that stretch reads VCLVLLGVGLGLVIVVLAAVL. Residues 30–573 lie on the Extracellular side of the membrane; that stretch reads SPRQASCGPG…LRKAGKASGY (544 aa). N-linked (GlcNAc...) asparagine glycosylation occurs at Asn98. Arg110 contacts L-glutamate. Residues Asn185, Asn204, Asn277, Asn303, Asn347, and Asn378 are each glycosylated (N-linked (GlcNAc...) asparagine). The active-site Nucleophile is Thr389. L-glutamate contacts are provided by residues Thr407, Glu428, and 454 to 455; that span reads SS.

The protein belongs to the gamma-glutamyltransferase family. Heterodimer composed of the light and heavy chains. The active site is located in the light chain. In terms of processing, cleaved by autocatalysis into a large and a small subunit. Glycosylated. As to expression, very low level of expression. Detected in spleen lymphocytes, medullary and paracortical thymic lymphocytes, lung interstitial cells, bronchial epithelium, proximal tubules in kidney, crypt cells in small intestine, neurons in brain stem and cerebral cortex and in Purkinje cells. In terms of tissue distribution, very low expression.

It localises to the membrane. It carries out the reaction glutathione + H2O = L-cysteinylglycine + L-glutamate. The catalysed reaction is an S-substituted glutathione + H2O = an S-substituted L-cysteinylglycine + L-glutamate. It catalyses the reaction leukotriene C4 + H2O = leukotriene D4 + L-glutamate. The enzyme catalyses S-[(2E,6E,10E)-geranylgeranyl]-L-glutathione + H2O = S-[(2E,6E,10E)-geranylgeranyl]-L-cysteinylglycine + L-glutamate. It carries out the reaction an N-terminal (5-L-glutamyl)-[peptide] + an alpha-amino acid = 5-L-glutamyl amino acid + an N-terminal L-alpha-aminoacyl-[peptide]. Its pathway is lipid metabolism; leukotriene D4 biosynthesis. It functions in the pathway sulfur metabolism; glutathione metabolism. With respect to regulation, inhibited by serine-borate. Its function is as follows. Cleaves the gamma-glutamyl bond of extracellular glutathione tripeptide (gamma-Glu-Cys-Gly) and certain glutathione conjugates. Hydrolyzes glutathione releasing L-Glu and Cys-Gly dipeptide which is further metabolized to maintain extracellular cysteine levels but also to provide cysteine necessary for intracellular glutathione synthesis. Among glutathione-S-conjugates metabolizes leukotriene C4 (LTC4) and S-geranylgeranyl-glutathione (GGG), but is inactive toward gamma-glutamyl leucine. Converts extracellular LTC4 to LTD4 during acute inflammatory response. Acts as a negative regulator of GGG bioactivity. GGT5 (via GGG catabolism) and ABCC1 (via extracellular transport) establish GGG gradients within lymphoid tissues to position P2RY8-positive lymphocytes at germinal centers in lymphoid follicles and restrict their chemotactic transmigration from blood vessels to bone marrow parenchyma. The transpeptidation reaction, i.e. the transfer of gamma-glutamyl moiety to an acceptor molecule to yield a new gamma-glutamyl compound requires high concentration of dipeptide acceptor and is considered nonphysiological. The protein is Glutathione hydrolase 5 proenzyme (Ggt5) of Mus musculus (Mouse).